Reading from the N-terminus, the 133-residue chain is Glycine cleavage system H protein (133 aa).

Positions 24–106 (IATIGISAYA…YGDGWLLKVR (83 aa)) constitute a Lipoyl-binding domain. K65 is modified (N6-lipoyllysine).

Belongs to the GcvH family. As to quaternary structure, the glycine cleavage system is composed of four proteins: P, T, L and H. (R)-lipoate is required as a cofactor.

In terms of biological role, the glycine cleavage system catalyzes the degradation of glycine. The H protein shuttles the methylamine group of glycine from the P protein to the T protein. The protein is Glycine cleavage system H protein of Crocosphaera subtropica (strain ATCC 51142 / BH68) (Cyanothece sp. (strain ATCC 51142)).